The following is a 390-amino-acid chain: Chaperone protein DnaJ (390 aa).

Residues 6 to 70 (DYYEILGVPR…QKRAQYDQFG (65 aa)) enclose the J domain. A CR-type zinc finger spans residues 146–228 (GSEKEIYVTR…CHGTGKVRRK (83 aa)). 8 residues coordinate Zn(2+): Cys159, Cys162, Cys176, Cys179, Cys202, Cys205, Cys216, and Cys219. 4 CXXCXGXG motif repeats span residues 159 to 166 (CPTCKGKG), 176 to 183 (CDMCNGTG), 202 to 209 (CPKCHGTG), and 216 to 223 (CHECHGTG).

Belongs to the DnaJ family. In terms of assembly, homodimer. It depends on Zn(2+) as a cofactor.

The protein resides in the cytoplasm. In terms of biological role, participates actively in the response to hyperosmotic and heat shock by preventing the aggregation of stress-denatured proteins and by disaggregating proteins, also in an autonomous, DnaK-independent fashion. Unfolded proteins bind initially to DnaJ; upon interaction with the DnaJ-bound protein, DnaK hydrolyzes its bound ATP, resulting in the formation of a stable complex. GrpE releases ADP from DnaK; ATP binding to DnaK triggers the release of the substrate protein, thus completing the reaction cycle. Several rounds of ATP-dependent interactions between DnaJ, DnaK and GrpE are required for fully efficient folding. Also involved, together with DnaK and GrpE, in the DNA replication of plasmids through activation of initiation proteins. The polypeptide is Chaperone protein DnaJ (Dictyoglomus thermophilum (strain ATCC 35947 / DSM 3960 / H-6-12)).